A 499-amino-acid polypeptide reads, in one-letter code: Serine/threonine-protein kinase RHS3 (499 aa).

The tract at residues 1–92 (MLLKPGNKLV…NSSKPHTGGD (92 aa)) is disordered. A compositionally biased stretch (basic and acidic residues) spans 39–55 (QKQVEQNTKKIEEHQIK). The span at 63–85 (SNHNVNMSSQSNNSESTSTNNSS) shows a compositional bias: low complexity. Positions 113 to 436 (FRVLKRLGYG…ATEIKQHPFF (324 aa)) constitute a Protein kinase domain. Residues 119 to 127 (LGYGDIGSV) and Lys144 contribute to the ATP site. Asp240 acts as the Proton acceptor in catalysis. Residues 437–499 (EGVNWALIRG…DPDYIVFEYF (63 aa)) enclose the AGC-kinase C-terminal domain.

The protein belongs to the protein kinase superfamily. AGC Ser/Thr protein kinase family. As to quaternary structure, interacts with PDPK1/PDK1. Autophosphorylated and phosphorylated by PDPK1/PDK1. In terms of tissue distribution, specifically expressed in root hair cells.

It catalyses the reaction L-seryl-[protein] + ATP = O-phospho-L-seryl-[protein] + ADP + H(+). The enzyme catalyses L-threonyl-[protein] + ATP = O-phospho-L-threonyl-[protein] + ADP + H(+). Activated by PDPK1/PDK1. Involved in root hair growth and morphogenesis. This chain is Serine/threonine-protein kinase RHS3, found in Arabidopsis thaliana (Mouse-ear cress).